The sequence spans 249 residues: 3-deoxy-manno-octulosonate cytidylyltransferase (249 aa).

This sequence belongs to the KdsB family.

It localises to the cytoplasm. It catalyses the reaction 3-deoxy-alpha-D-manno-oct-2-ulosonate + CTP = CMP-3-deoxy-beta-D-manno-octulosonate + diphosphate. It participates in nucleotide-sugar biosynthesis; CMP-3-deoxy-D-manno-octulosonate biosynthesis; CMP-3-deoxy-D-manno-octulosonate from 3-deoxy-D-manno-octulosonate and CTP: step 1/1. Its pathway is bacterial outer membrane biogenesis; lipopolysaccharide biosynthesis. In terms of biological role, activates KDO (a required 8-carbon sugar) for incorporation into bacterial lipopolysaccharide in Gram-negative bacteria. This Coxiella burnetii (strain RSA 331 / Henzerling II) protein is 3-deoxy-manno-octulosonate cytidylyltransferase.